The sequence spans 380 residues: Phthiodiolone/phenolphthiodiolone dimycocerosates ketoreductase (380 aa).

The protein belongs to the mer family. Phthiodiolone/phenolphthiodiolone dimycocerosates ketoreductase subfamily.

In terms of biological role, catalyzes the reduction of the keto moiety of phthiodiolone dimycocerosates (DIM B) and glycosylated phenolphthiodiolone dimycocerosates to form the intermediate compounds phthiotriol and glycosylated phenolphthiotriol dimycocerosates during phthiocerol dimycocerosates (DIM A) and glycosylated phenolphthiocerol dimycocerosates (PGL) biosynthesis. The chain is Phthiodiolone/phenolphthiodiolone dimycocerosates ketoreductase from Mycobacterium sp. (strain JLS).